The sequence spans 457 residues: MANNYQTLYDSAIKRIPYDLISDQAYAILQNAKTHKVCDGVLYIIVANAFEKSIINGNFINIISKYLSEEFKKENIVNFEFIIDNEKLLINSNFLIKETNIKNRFNFSDELLRYNFNNLVISNFNQKAIKAIENLFSNNYDNSSMCNPLFLFGKVGVGKTHIVAAAGNRFANSNPNLKIYYYEGQDFFRKFCSASLKGTSYVEEFKKEIASADLLIFEDIQNIQSRDSTAELFFNIFNDIKLNGGKIILTSDRTPNELNGFHNRIISRLASGLQCKISQPDKNEAIKIINNWFEFKKKYQITDEAKEYIAEGFHTDIRQMIGNLKQICFWADNDTNKDLIITKDYVIECSVENEIPLNIVVKKQFKPEQIIEIVAKELNIKTDLIKSSIRKNNIVWARDIVCYILKNKLNLTLTDIGKLLNGREHTTISHSISKVQKILDDENSQEALQINLIINKF.

Positions 1–73 are domain I, interacts with DnaA modulators; sequence MANNYQTLYD…SKYLSEEFKK (73 aa). Residues 73–108 form a domain II region; it reads KENIVNFEFIIDNEKLLINSNFLIKETNIKNRFNFS. A domain III, AAA+ region region spans residues 109–331; it reads DELLRYNFNN…GNLKQICFWA (223 aa). ATP is bound by residues G156, G158, K159, and T160. The segment at 332–457 is domain IV, binds dsDNA; the sequence is DNDTNKDLII…LQINLIINKF (126 aa).

This sequence belongs to the DnaA family. Oligomerizes as a right-handed, spiral filament on DNA at oriC.

Its subcellular location is the cytoplasm. Plays an essential role in the initiation and regulation of chromosomal replication. ATP-DnaA binds to the origin of replication (oriC) to initiate formation of the DNA replication initiation complex once per cell cycle. Binds the DnaA box (a 9 base pair repeat at the origin) and separates the double-stranded (ds)DNA. Forms a right-handed helical filament on oriC DNA; dsDNA binds to the exterior of the filament while single-stranded (ss)DNA is stabiized in the filament's interior. The ATP-DnaA-oriC complex binds and stabilizes one strand of the AT-rich DNA unwinding element (DUE), permitting loading of DNA polymerase. After initiation quickly degrades to an ADP-DnaA complex that is not apt for DNA replication. Binds acidic phospholipids. The chain is Chromosomal replication initiator protein DnaA from Ureaplasma parvum serovar 3 (strain ATCC 700970).